The chain runs to 545 residues: MVSLLRCQSFKPSSSLICSLALSAAFALSSSAFAEETKPAENKPATPVVSPPKATAQPANKNQVRFTKTGTFDGDSVVKLARKLASKPYVVLKDPLPAGLAKLTYDEYRDIRFNPISSIWRDQGLPFQMQMFHRGFYFQDLIEIAIVEANQATHLAYEPKYFTAGEVITQALPNDDIGYSGFRIHNQLNTNGVYDELMVFQGASYFRALGKGNSYGLSARGLALKTADPEGEEFPIFRAFWVERPSYDSNLIVVHALLDSPSVAGAYRFSVRPGDNTQIDVEATLFPRVELSKVGLAPSTSMFLHSLNGRHDTDDFRPEVHDSDGLLMFNGRGEHLWRPLANPRQLQVSAFSDNSPQGFGLIQRERNYASYQDLEAHYERRPSLWIEPVGNWGQGAVVLTEIPTESEIHDNIVSFWKPRQPIPAGSEYHFAYRMSWGEEPVAKTNSVVVSRTASGRADIAKATPRRLFVVDYHLNGAMPDELPLAKVESSGGVISNVVIARNAANNGYRLAFELEPEDKELIELRAELKFSTPRQVETWLYRWTL.

A signal peptide spans 1-34; that stretch reads MVSLLRCQSFKPSSSLICSLALSAAFALSSSAFA. The tract at residues 38 to 60 is disordered; the sequence is KPAENKPATPVVSPPKATAQPAN.

It belongs to the OpgD/OpgG family.

The protein resides in the periplasm. It functions in the pathway glycan metabolism; osmoregulated periplasmic glucan (OPG) biosynthesis. In terms of biological role, involved in the biosynthesis of osmoregulated periplasmic glucans (OPGs). In Shewanella sp. (strain ANA-3), this protein is Glucans biosynthesis protein G.